Reading from the N-terminus, the 373-residue chain is Queuine tRNA-ribosyltransferase (373 aa).

The Proton acceptor role is filled by Asp-89. Substrate-binding positions include 89–93, Asp-143, Gln-192, and Gly-220; that span reads DSGGF. Residues 251–257 are RNA binding; it reads GVGTPED. Residue Asp-270 is the Nucleophile of the active site. An RNA binding; important for wobble base 34 recognition region spans residues 275-279; sequence TRNAR. The Zn(2+) site is built by Cys-308, Cys-310, Cys-313, and His-339.

It belongs to the queuine tRNA-ribosyltransferase family. In terms of assembly, homodimer. Within each dimer, one monomer is responsible for RNA recognition and catalysis, while the other monomer binds to the replacement base PreQ1. It depends on Zn(2+) as a cofactor.

It catalyses the reaction 7-aminomethyl-7-carbaguanine + guanosine(34) in tRNA = 7-aminomethyl-7-carbaguanosine(34) in tRNA + guanine. The protein operates within tRNA modification; tRNA-queuosine biosynthesis. Functionally, catalyzes the base-exchange of a guanine (G) residue with the queuine precursor 7-aminomethyl-7-deazaguanine (PreQ1) at position 34 (anticodon wobble position) in tRNAs with GU(N) anticodons (tRNA-Asp, -Asn, -His and -Tyr). Catalysis occurs through a double-displacement mechanism. The nucleophile active site attacks the C1' of nucleotide 34 to detach the guanine base from the RNA, forming a covalent enzyme-RNA intermediate. The proton acceptor active site deprotonates the incoming PreQ1, allowing a nucleophilic attack on the C1' of the ribose to form the product. After dissociation, two additional enzymatic reactions on the tRNA convert PreQ1 to queuine (Q), resulting in the hypermodified nucleoside queuosine (7-(((4,5-cis-dihydroxy-2-cyclopenten-1-yl)amino)methyl)-7-deazaguanosine). In Aliarcobacter butzleri (strain RM4018) (Arcobacter butzleri), this protein is Queuine tRNA-ribosyltransferase.